The sequence spans 127 residues: uncharacterized protein (127 aa).

A helical transmembrane segment spans residues 91 to 113; sequence IYLIVSIAVSILAIIAFFIFLML.

The protein resides in the membrane. This is an uncharacterized protein from Bacillus subtilis (strain 168).